Consider the following 388-residue polypeptide: MNMAPTLATACASLPPEGALAPRGGPSALMTHGTALIMAGGTGGHIFPGLALAHALRERGWRVHWLGGAGTASQPSMESQLVPPQGFAFESIDFSGVRGKGLGTLVRLPWRLLRACWQSVALLRRVQPDVVLGLGGYITLPAGLMSVLLGKALILHEQNSVAGMANKVLARFATRVFTAFPDVLPNGHWVGNPLRAAFLQVPDPATRFAGRAGPLKLLVLGGSLGARALNDIVPRALALLPPQARPIVTHQSGARQIDALRANYAGAGVQAELTPFIDDTAQAMAGADLVLCRAGASTVTEIAAVGAAALFVPFPSAVDDHQTSNARFLVDQGAGWLKPQSELSPEWLADMLQKTERIELMGRGLEAKKLQKLDATHKIVAACEEVVR.

UDP-N-acetyl-alpha-D-glucosamine-binding positions include 42–44, N159, R195, S223, I277, and Q322; that span reads TGG.

Belongs to the glycosyltransferase 28 family. MurG subfamily.

The protein resides in the cell inner membrane. It carries out the reaction di-trans,octa-cis-undecaprenyl diphospho-N-acetyl-alpha-D-muramoyl-L-alanyl-D-glutamyl-meso-2,6-diaminopimeloyl-D-alanyl-D-alanine + UDP-N-acetyl-alpha-D-glucosamine = di-trans,octa-cis-undecaprenyl diphospho-[N-acetyl-alpha-D-glucosaminyl-(1-&gt;4)]-N-acetyl-alpha-D-muramoyl-L-alanyl-D-glutamyl-meso-2,6-diaminopimeloyl-D-alanyl-D-alanine + UDP + H(+). The protein operates within cell wall biogenesis; peptidoglycan biosynthesis. Functionally, cell wall formation. Catalyzes the transfer of a GlcNAc subunit on undecaprenyl-pyrophosphoryl-MurNAc-pentapeptide (lipid intermediate I) to form undecaprenyl-pyrophosphoryl-MurNAc-(pentapeptide)GlcNAc (lipid intermediate II). This Albidiferax ferrireducens (strain ATCC BAA-621 / DSM 15236 / T118) (Rhodoferax ferrireducens) protein is UDP-N-acetylglucosamine--N-acetylmuramyl-(pentapeptide) pyrophosphoryl-undecaprenol N-acetylglucosamine transferase.